A 64-amino-acid polypeptide reads, in one-letter code: Large ribosomal subunit protein bL35 (64 aa).

Belongs to the bacterial ribosomal protein bL35 family.

This Chloroherpeton thalassium (strain ATCC 35110 / GB-78) protein is Large ribosomal subunit protein bL35.